We begin with the raw amino-acid sequence, 383 residues long: MGDWSALGKLLDKVQAYSTAGGKVWLSVLFIFRILLLGTAVESAWGDEQSAFRCNTQQPGCENVCYDKSFPISHVRFWVLQIIFVSVPTLLYLAHVFYVMRKEEKLNKKEEELKVVAQTDGANVDMHLKQIEIKKFKYGIEEHGKVKMRGGLLRTYIISILFKSVFEVAFLLIQWYIYGFSLSAVYTCKRDPCPHQVDCFLSRPTEKTIFIIFMLVVSLVSLALNIIELFYVFFKGVKDRVKGKSDPYHTTTGPLSPSKDCGSPKYAYFNGCSSPTAPLSPMSPPGYKLVTGDRNNSSCRNYNKQASEQNWANYSAEQNRMGQAGSTISNSHAQPFDFPDDHQNSKKLDAGHELQPLAIVDQRPSSRASSRASSRPRPDDLEI.

Residues 2 to 23 (GDWSALGKLLDKVQAYSTAGGK) are Cytoplasmic-facing. Ser-5 is subject to Phosphoserine. The chain crosses the membrane as a helical span at residues 24–44 (VWLSVLFIFRILLLGTAVESA). The Extracellular segment spans residues 45–76 (WGDEQSAFRCNTQQPGCENVCYDKSFPISHVR). 2 cysteine pairs are disulfide-bonded: Cys-54-Cys-193 and Cys-188-Cys-199. A helical membrane pass occupies residues 77 to 97 (FWVLQIIFVSVPTLLYLAHVF). Over 98 to 156 (YVMRKEEKLNKKEEELKVVAQTDGANVDMHLKQIEIKKFKYGIEEHGKVKMRGGLLRTY) the chain is Cytoplasmic. Lys-145 participates in a covalent cross-link: Glycyl lysine isopeptide (Lys-Gly) (interchain with G-Cter in SUMO). The chain crosses the membrane as a helical span at residues 157 to 177 (IISILFKSVFEVAFLLIQWYI). Residues 178–208 (YGFSLSAVYTCKRDPCPHQVDCFLSRPTEKT) lie on the Extracellular side of the membrane. Residues 209–229 (IFIIFMLVVSLVSLALNIIEL) form a helical membrane-spanning segment. The Cytoplasmic segment spans residues 230–383 (FYVFFKGVKD…SRPRPDDLEI (154 aa)). A Glycyl lysine isopeptide (Lys-Gly) (interchain with G-Cter in SUMO) cross-link involves residue Lys-238. The interval 245–383 (SDPYHTTTGP…SRPRPDDLEI (139 aa)) is interaction with NOV. Residue Tyr-248 is modified to Phosphotyrosine. Residues Ser-256, Ser-258, and Ser-263 each carry the phosphoserine modification. Residues 265–383 (KYAYFNGCSS…SRPRPDDLEI (119 aa)) form an interaction with UBQLN4 region. Cys-272 is modified (S-nitrosocysteine). Thr-276 is subject to Phosphothreonine. Residues Ser-307 and Ser-315 each carry the phosphoserine modification. Polar residues predominate over residues 318 to 333 (QNRMGQAGSTISNSHA). The tract at residues 318–383 (QNRMGQAGST…SRPRPDDLEI (66 aa)) is disordered. Ser-326 is modified (phosphoserine; by CK1). Phosphothreonine is present on Thr-327. Phosphoserine; by CK1 is present on residues Ser-329 and Ser-331. Over residues 339 to 352 (PDDHQNSKKLDAGH) the composition is skewed to basic and acidic residues. Phosphoserine occurs at positions 345 and 366. Residues 363 to 375 (RPSSRASSRASSR) show a composition bias toward low complexity. Ser-369 is modified (phosphoserine; by PKC/PRKCG and PKC/PRKCD). Phosphoserine is present on residues Ser-370 and Ser-374.

The protein belongs to the connexin family. Alpha-type (group II) subfamily. A connexon is composed of a hexamer of connexins. Interacts with SGSM3. Interacts with RIC1/CIP150. Interacts with CNST and CSNK1D. Interacts (via C-terminus) with TJP1. Interacts (via C-terminus) with SRC (via SH3 domain). Interacts (not ubiquitinated) with UBQLN4 (via UBA domain). Interacts with NOV. Interacts with TMEM65. Interacts with ANK3/ANKG and PKP2. Post-translationally, phosphorylation at Ser-326, Ser-329 and Ser-331 by CK1 modulates gap junction assembly. Phosphorylated at Ser-369 by PRKCG; phosphorylation induces disassembly of gap junction plaques and inhibition of gap junction activity. Phosphorylation at Ser-369 by PRKCD triggers its internalization into small vesicles leading to proteasome-mediated degradation. Sumoylated with SUMO1, SUMO2 and SUMO3, which may regulate the level of functional Cx43 gap junctions at the plasma membrane. May be desumoylated by SENP1 or SENP2. In terms of processing, acetylated in the developing cortex; leading to delocalization from the cell membrane.

Its subcellular location is the cell membrane. It localises to the cell junction. The protein localises to the gap junction. The protein resides in the endoplasmic reticulum. Its function is as follows. Gap junction protein that acts as a regulator of bladder capacity. A gap junction consists of a cluster of closely packed pairs of transmembrane channels, the connexons, through which materials of low MW diffuse from one cell to a neighboring cell. May play a critical role in the physiology of hearing by participating in the recycling of potassium to the cochlear endolymph. Negative regulator of bladder functional capacity: acts by enhancing intercellular electrical and chemical transmission, thus sensitizing bladder muscles to cholinergic neural stimuli and causing them to contract. May play a role in cell growth inhibition through the regulation of NOV expression and localization. Plays an essential role in gap junction communication in the ventricles. The protein is Gap junction alpha-1 protein (GJA1) of Bos taurus (Bovine).